The chain runs to 394 residues: MNQTWRTHLQSKLQQLHEREQYRNLHVTEQAEETWLIRDEKRMLNLASNNYLGLAGDERLKEAAIACTRKYGTGATASRLVVGNYSLYEEVERSICDWKGTEKALVVNSGYTANIGVISSLVSRHDIVFSDKLNHASIVDGIILSGAEHKRYGHNDLDHLEKLLKTASPEKRKLIVTDTVFSMDGDTAYLRELVELKEKYGAILIVDEAHASGIYGIGGAGLSHIEDLAQKIDIHMGTFSKALGCYGAYLTGDAIYIEYLHNMMRSFIFTTALPPGTLGAVQKAIEIVQEDHKRRENLIANGEYFRSKLRDAGFNIGNSSTHIVPIVVGSNENALRFSKRLQEAGIAAIAIRPPTVPINSSRIRFAVTSQHTIADLKWAIDRIIHIAKEEELFV.

Arg23 lines the substrate pocket. Residue 110 to 111 (GY) participates in pyridoxal 5'-phosphate binding. His135 is a binding site for substrate. Pyridoxal 5'-phosphate contacts are provided by residues Ser182, 207 to 210 (DEAH), and 238 to 241 (TFSK). At Lys241 the chain carries N6-(pyridoxal phosphate)lysine. Thr355 lines the substrate pocket.

The protein belongs to the class-II pyridoxal-phosphate-dependent aminotransferase family. BioF subfamily. Homodimer. Pyridoxal 5'-phosphate serves as cofactor.

It catalyses the reaction 6-carboxyhexanoyl-[ACP] + L-alanine + H(+) = (8S)-8-amino-7-oxononanoate + holo-[ACP] + CO2. The protein operates within cofactor biosynthesis; biotin biosynthesis. Functionally, catalyzes the decarboxylative condensation of pimeloyl-[acyl-carrier protein] and L-alanine to produce 8-amino-7-oxononanoate (AON), [acyl-carrier protein], and carbon dioxide. The polypeptide is Putative 8-amino-7-oxononanoate synthase (bioF) (Bacillus cereus (strain Q1)).